The sequence spans 322 residues: Aldo-keto reductase family 1 member C13 (322 aa).

Residues 20–24 (GFGTY) and Asp50 each bind NAD(+). Tyr55 functions as the Proton donor in the catalytic mechanism. His117 is a binding site for substrate. Residues 166–167 (SN), Gln190, 216–224 (FGALGTQRY), and 270–280 (QSFYESEMKEN) each bind NAD(+).

The protein belongs to the aldo/keto reductase family. As to quaternary structure, monomer. The N-terminus is blocked.

The enzyme catalyses morphine + NAD(+) = morphinone + NADH + H(+). It catalyses the reaction morphine + NADP(+) = morphinone + NADPH + H(+). Its activity is regulated as follows. Strongly inhibited by sulfhydryl reagents and ketamine, but not by pyrazole, barbital and indomethacine. Catalyzes the dehydrogenation of morphine to morphinone. The enzyme also exhibits significant activity for a variety of cyclic and alicyclic alcohols. In addition to xenobiotics, the enzyme catalyzes the dehydrogenation of 17-beta-hydroxysteroids with much higher affinities than morphine. Uses both NAD and NADP, but the activity is much greater with NAD than with NADP. The protein is Aldo-keto reductase family 1 member C13 (AKR1C13) of Mesocricetus auratus (Golden hamster).